A 284-amino-acid polypeptide reads, in one-letter code: Urease accessory protein UreD (284 aa).

This sequence belongs to the UreD family. UreD, UreF and UreG form a complex that acts as a GTP-hydrolysis-dependent molecular chaperone, activating the urease apoprotein by helping to assemble the nickel containing metallocenter of UreC. The UreE protein probably delivers the nickel.

The protein localises to the cytoplasm. In terms of biological role, required for maturation of urease via the functional incorporation of the urease nickel metallocenter. In Bordetella bronchiseptica (strain ATCC BAA-588 / NCTC 13252 / RB50) (Alcaligenes bronchisepticus), this protein is Urease accessory protein UreD.